The sequence spans 332 residues: Holliday junction branch migration complex subunit RuvB (332 aa).

The segment at 1–181 (MSRILDNEIM…FGITGHMEYY (181 aa)) is large ATPase domain (RuvB-L). ATP contacts are provided by residues L20, R21, G62, K65, T66, T67, 128–130 (EDF), R171, Y181, and R218. T66 provides a ligand contact to Mg(2+). A small ATPAse domain (RuvB-S) region spans residues 182-252 (AHADLTEIVE…ITDKALTMLD (71 aa)). Residues 255 to 332 (HEGLDYVDQK…EHLGYEYSEK (78 aa)) form a head domain (RuvB-H) region. The DNA site is built by R291, R310, R312, and R315.

This sequence belongs to the RuvB family. In terms of assembly, homohexamer. Forms an RuvA(8)-RuvB(12)-Holliday junction (HJ) complex. HJ DNA is sandwiched between 2 RuvA tetramers; dsDNA enters through RuvA and exits via RuvB. An RuvB hexamer assembles on each DNA strand where it exits the tetramer. Each RuvB hexamer is contacted by two RuvA subunits (via domain III) on 2 adjacent RuvB subunits; this complex drives branch migration. In the full resolvosome a probable DNA-RuvA(4)-RuvB(12)-RuvC(2) complex forms which resolves the HJ.

The protein localises to the cytoplasm. It carries out the reaction ATP + H2O = ADP + phosphate + H(+). In terms of biological role, the RuvA-RuvB-RuvC complex processes Holliday junction (HJ) DNA during genetic recombination and DNA repair, while the RuvA-RuvB complex plays an important role in the rescue of blocked DNA replication forks via replication fork reversal (RFR). RuvA specifically binds to HJ cruciform DNA, conferring on it an open structure. The RuvB hexamer acts as an ATP-dependent pump, pulling dsDNA into and through the RuvAB complex. RuvB forms 2 homohexamers on either side of HJ DNA bound by 1 or 2 RuvA tetramers; 4 subunits per hexamer contact DNA at a time. Coordinated motions by a converter formed by DNA-disengaged RuvB subunits stimulates ATP hydrolysis and nucleotide exchange. Immobilization of the converter enables RuvB to convert the ATP-contained energy into a lever motion, pulling 2 nucleotides of DNA out of the RuvA tetramer per ATP hydrolyzed, thus driving DNA branch migration. The RuvB motors rotate together with the DNA substrate, which together with the progressing nucleotide cycle form the mechanistic basis for DNA recombination by continuous HJ branch migration. Branch migration allows RuvC to scan DNA until it finds its consensus sequence, where it cleaves and resolves cruciform DNA. The polypeptide is Holliday junction branch migration complex subunit RuvB (Streptococcus pneumoniae serotype 2 (strain D39 / NCTC 7466)).